The primary structure comprises 327 residues: (-)-delta-cadinene synthase (327 aa).

Aspartate 84, aspartate 85, asparagine 222, threonine 226, and glutamate 230 together coordinate Mg(2+).

It belongs to the terpene synthase family.

The catalysed reaction is (2E,6E)-farnesyl diphosphate = (-)-delta-cadinene + diphosphate. Functionally, catalyzes the conversion of (2E,6E)-farnesyl diphosphate into (-)-delta-cadinene. Cyclization mechanism involves an intermediate nerolidyl diphosphate leading to a helminthogermacradienyl cation. The polypeptide is (-)-delta-cadinene synthase (Streptomyces clavuligerus).